A 445-amino-acid polypeptide reads, in one-letter code: MARKLFIQTHGCQMNEYDSTRMVDLLESSHGLEPTDNPEEADVLLLNTCSIREKAQEKVFHQLGRWKKLKDAKPDMIIGVGGCVASQEGDAIRDRAPYVDVVFGPQTLHRLPGLITQAASTRELAIDVTFPEIEKFDNLPEPSVDGPSAFVSIMEGCSKYCTFCVVPYTRGEEVSRPVQPVLKEIQHLADMGVREVNLLGQNVNAYQGVGADGDTLDLADLIRLIRDIDGIDRIRYTTSHPVEFSEALIQVYEDVPELVSHLHLPVQSGSDRILAMMKRNHMVLEYKSKLRKLKRIRPDISFSSDFIIGFPGETDRDFEDTMNLIHDIGFDMSFSFIYSARPGTPAADLPDDVDMEVKKQRLAILQQRINQNVQDISRKMVGSTQRILVDGFSKKDPGQLKGRTENNRVVNFQCDDTDLIGKFVDVTIAKAYSNSLLGTDPRNPS.

Positions 3–120 constitute an MTTase N-terminal domain; it reads RKLFIQTHGC…LPGLITQAAS (118 aa). Positions 12, 49, 83, 157, 161, and 164 each coordinate [4Fe-4S] cluster. Residues 143–375 form the Radical SAM core domain; sequence SVDGPSAFVS…QQRINQNVQD (233 aa). The 65-residue stretch at 378 to 442 folds into the TRAM domain; the sequence is RKMVGSTQRI…SNSLLGTDPR (65 aa).

It belongs to the methylthiotransferase family. MiaB subfamily. In terms of assembly, monomer. Requires [4Fe-4S] cluster as cofactor.

The protein resides in the cytoplasm. It carries out the reaction N(6)-dimethylallyladenosine(37) in tRNA + (sulfur carrier)-SH + AH2 + 2 S-adenosyl-L-methionine = 2-methylsulfanyl-N(6)-dimethylallyladenosine(37) in tRNA + (sulfur carrier)-H + 5'-deoxyadenosine + L-methionine + A + S-adenosyl-L-homocysteine + 2 H(+). In terms of biological role, catalyzes the methylthiolation of N6-(dimethylallyl)adenosine (i(6)A), leading to the formation of 2-methylthio-N6-(dimethylallyl)adenosine (ms(2)i(6)A) at position 37 in tRNAs that read codons beginning with uridine. This Alcanivorax borkumensis (strain ATCC 700651 / DSM 11573 / NCIMB 13689 / SK2) protein is tRNA-2-methylthio-N(6)-dimethylallyladenosine synthase.